We begin with the raw amino-acid sequence, 127 residues long: Protein pkiA (127 aa).

Residues 16-127 (IFAKIISGAI…GGRQMNWPPG (112 aa)) form the HIT domain.

The chain is Protein pkiA (pkiA) from Dictyostelium discoideum (Social amoeba).